The chain runs to 130 residues: Small ribosomal subunit protein uS11 (130 aa).

The protein belongs to the universal ribosomal protein uS11 family. Part of the 30S ribosomal subunit. Interacts with proteins S7 and S18. Binds to IF-3.

Located on the platform of the 30S subunit, it bridges several disparate RNA helices of the 16S rRNA. Forms part of the Shine-Dalgarno cleft in the 70S ribosome. The polypeptide is Small ribosomal subunit protein uS11 (Shewanella halifaxensis (strain HAW-EB4)).